A 692-amino-acid chain; its full sequence is Elongation factor G (692 aa).

The region spanning 8 to 283 (EKVRNIGIAA…AVVDYLPAPT (276 aa)) is the tr-type G domain. GTP is bound by residues 17-24 (AHIDAGKT), 81-85 (DTPGH), and 135-138 (NKMD).

It belongs to the TRAFAC class translation factor GTPase superfamily. Classic translation factor GTPase family. EF-G/EF-2 subfamily.

It is found in the cytoplasm. Functionally, catalyzes the GTP-dependent ribosomal translocation step during translation elongation. During this step, the ribosome changes from the pre-translocational (PRE) to the post-translocational (POST) state as the newly formed A-site-bound peptidyl-tRNA and P-site-bound deacylated tRNA move to the P and E sites, respectively. Catalyzes the coordinated movement of the two tRNA molecules, the mRNA and conformational changes in the ribosome. This is Elongation factor G from Nitratiruptor sp. (strain SB155-2).